The primary structure comprises 444 residues: NADH-dependent flavin oxidoreductase nadA (444 aa).

Residues 37-40 (ERMC) and Gln-123 each bind FMN. The tract at residues 127–149 (PGRQTPSHRQPEPISASDVPLDT) is disordered. Substrate is bound at residue 192–195 (HAAH). 345-346 (AR) is a binding site for FMN.

The protein belongs to the NADH:flavin oxidoreductase/NADH oxidase family.

The protein resides in the cytoplasm. It localises to the cytosol. Its function is as follows. NADH-dependent flavin oxidoreductase; part of the gene cluster that mediates the biosynthesis of aflatoxins, a group of polyketide-derived furanocoumarins, and part of the most toxic and carcinogenic compounds among the known mycotoxins. The four major aflatoxins produced by A.parasiticus are aflatoxin B1 (AFB1), aflatoxin B2 (AFB2), aflatoxin G1 (AFG1) and aflatoxin G2 (AFG2). Within the aflatoxin pathway, the NADH-dependent flavin oxidoreductase nadA is specifically required for the last steps in which OMST is converted specifically to aflatoxin G1. The biosynthesis of aflatoxins begins with the norsolorinic acid synthase aflC that combines a hexanoyl starter unit produced by the fatty acid synthase aflA/aflB and 7 malonyl-CoA extender units to synthesize the precursor NOR. The second step is the conversion of NOR to averantin and requires the norsolorinic acid ketoreductase aflD, which catalyzes the dehydration of norsolorinic acid to form (1'S)-averantin. The norsolorinic acid reductases aflE and aflF may also play a role in the conversion of NOR to AVN. The cytochrome P450 monooxygenase aflG then catalyzes the hydroxylation of AVN to 5'hydroxyaverantin (HAVN). The next step is performed by the 5'-hydroxyaverantin dehydrogenase aflH that transforms HAVN to 5'-oxoaverantin (OAVN) which is further converted to averufin (AVF) by aflK that plays a dual role in the pathway, as a 5'-oxoaverantin cyclase that mediates conversion of 5'-oxoaverantin, as well as a versicolorin B synthase in a later step in the pathway. The averufin oxidase aflI catalyzes the conversion of AVF to versiconal hemiacetal acetate (VHA). VHA is then the substrate for the versiconal hemiacetal acetate esterase aflJ to yield versiconal (VAL). Versicolorin B synthase aflK then converts VAL to versicolorin B (VERB) by closing the bisfuran ring of aflatoxin which is required for DNA-binding, thus giving to aflatoxin its activity as a mutagen. Then, the activity of the versicolorin B desaturase aflL leads to versicolorin A (VERA). A branch point starts from VERB since it can also be converted to dihydrodemethylsterigmatocystin (DMDHST), probably also by aflL, VERA being a precursor for aflatoxins B1 and G1, and DMDHST for aflatoxins B2 and G2. Next, the versicolorin reductase aflM and the cytochrome P450 monooxygenase aflN are involved in conversion of VERA to demethylsterigmatocystin (DMST). AflX and aflY seem also involved in this step, through probable aflX-mediated epoxide ring-opening step following versicolorin A oxidation and aflY-mediated Baeyer-Villiger oxidation required for the formation of the xanthone ring. The methyltransferase aflO then leads to the modification of DMST to sterigmatocystin (ST), and of DMDHST to dihydrosterigmatocystin (DHST). Both ST and DHST are then substrates of the O-methyltransferase aflP to yield O-methylsterigmatocystin (OMST) and dihydro-O-methylsterigmatocystin (DHOMST), respectively. Finally OMST is converted to aflatoxins B1 and G1, and DHOMST to aflatoxins B2 and G2, via the action of several enzymes including O-methylsterigmatocystin oxidoreductase aflQ, the cytochrome P450 monooxygenase aflU, but also the NADH-dependent flavin oxidoreductase nadA which is specifically required for the synthesis of AFG1. The protein is NADH-dependent flavin oxidoreductase nadA of Aspergillus parasiticus (strain ATCC 56775 / NRRL 5862 / SRRC 143 / SU-1).